Reading from the N-terminus, the 301-residue chain is Protein KTI12 homolog (301 aa).

Residue 8-15 (GQPCSGKS) participates in ATP binding. Positions 262–275 (LRRTFIKLAGQYSL) are calmodulin-binding.

Belongs to the KTI12 family. In terms of assembly, interacts with the elongator complex. Binds to calmodulin in a calcium-dependent manner.

The protein resides in the cytoplasm. The protein localises to the nucleus. In terms of biological role, elongator complex-associated factor that is not a structural subunit but rather transiently contacts the complex. Regulates both meristem activity and organ growth; acts as a positive regulator of adaxial leaf patterning. Required for an early step in synthesis of 5-carbamoylmethyl (ncm5) groups present on uridines (ncm5U) at the wobble position in tRNA. This is Protein KTI12 homolog from Oryza sativa subsp. indica (Rice).